The following is a 74-amino-acid chain: Putative membrane protein insertion efficiency factor (74 aa).

This sequence belongs to the UPF0161 family.

It localises to the cell membrane. Could be involved in insertion of integral membrane proteins into the membrane. This Anoxybacillus flavithermus (strain DSM 21510 / WK1) protein is Putative membrane protein insertion efficiency factor.